Consider the following 246-residue polypeptide: FAD synthetase (246 aa).

This sequence belongs to the RibF family.

The enzyme catalyses FMN + ATP + H(+) = FAD + diphosphate. Its pathway is cofactor biosynthesis; FAD biosynthesis; FAD from FMN: step 1/1. In terms of biological role, catalyzes the adenylation of flavin mononucleotide (FMN) to form flavin adenine dinucleotide (FAD) coenzyme. Can also catalyze, with lower efficiency, the adenylation of the toxic riboflavin analogs 8-demethyl-8-aminoriboflavin mononucleotide (AFMN) and roseoflavin mononucleotide (RoFMN) to 8-demethyl-8-aminoriboflavin adenine dinucleotide (AFAD) and roseoflavin adenine dinucleotide (RoFAD), respectively. The polypeptide is FAD synthetase (Listeria monocytogenes serovar 1/2a (strain ATCC BAA-679 / EGD-e)).